The sequence spans 426 residues: Serine hydroxymethyltransferase 1 (426 aa).

Residues Leu-118 and 122 to 124 (GHL) contribute to the (6S)-5,6,7,8-tetrahydrofolate site. An N6-(pyridoxal phosphate)lysine modification is found at Lys-227.

Belongs to the SHMT family. Homodimer. Pyridoxal 5'-phosphate is required as a cofactor.

The protein localises to the cytoplasm. The catalysed reaction is (6R)-5,10-methylene-5,6,7,8-tetrahydrofolate + glycine + H2O = (6S)-5,6,7,8-tetrahydrofolate + L-serine. It participates in one-carbon metabolism; tetrahydrofolate interconversion. The protein operates within amino-acid biosynthesis; glycine biosynthesis; glycine from L-serine: step 1/1. Catalyzes the reversible interconversion of serine and glycine with tetrahydrofolate (THF) serving as the one-carbon carrier. This reaction serves as the major source of one-carbon groups required for the biosynthesis of purines, thymidylate, methionine, and other important biomolecules. Also exhibits THF-independent aldolase activity toward beta-hydroxyamino acids, producing glycine and aldehydes, via a retro-aldol mechanism. The sequence is that of Serine hydroxymethyltransferase 1 from Mycobacterium bovis (strain ATCC BAA-935 / AF2122/97).